The primary structure comprises 427 residues: Serine hydroxymethyltransferase (427 aa).

120-122 serves as a coordination point for (6S)-5,6,7,8-tetrahydrofolate; it reads GHI. K226 is subject to N6-(pyridoxal phosphate)lysine.

It belongs to the SHMT family. As to quaternary structure, homodimer. Pyridoxal 5'-phosphate is required as a cofactor.

The protein resides in the cytoplasm. The protein operates within amino-acid biosynthesis; glycine biosynthesis; glycine from L-serine: step 1/1. In terms of biological role, catalyzes the reversible interconversion of serine and glycine with a modified folate serving as the one-carbon carrier. Also exhibits a pteridine-independent aldolase activity toward beta-hydroxyamino acids, producing glycine and aldehydes, via a retro-aldol mechanism. This chain is Serine hydroxymethyltransferase, found in Pyrococcus abyssi (strain GE5 / Orsay).